A 219-amino-acid polypeptide reads, in one-letter code: Multiple organellar RNA editing factor 2, chloroplastic (219 aa).

The transit peptide at 1–48 (MALPLSGTRHLTRALLSNVTLMAPPRIPSSVHYGGSRLGCSTRFFSIR) directs the protein to the chloroplast. Residues 182–219 (VQRSPERQRRVEPQPQRAQDRPRYNDRTRYSRRRENTR) form a disordered region. The span at 185–219 (SPERQRRVEPQPQRAQDRPRYNDRTRYSRRRENTR) shows a compositional bias: basic and acidic residues.

The protein belongs to the MORF family. As to quaternary structure, homodimer and heterodimer with MORF9. Interacts with protoporphyrinogen oxidase 1 PPOX1. Heterodimers with MORF8/RIP1 and MORF9/RIP9. Interacts with PCMP-A2/PMD1. Interacts with ORRM1. Interacts with ORRM6.

The protein localises to the plastid. Its subcellular location is the chloroplast. Functionally, involved in plastid rRNA processing and consequently in translation and early chloroplast differentiation. Involved in organellar RNA editing. Required for the processing of multiple editing sites in plastids. The chain is Multiple organellar RNA editing factor 2, chloroplastic from Arabidopsis thaliana (Mouse-ear cress).